The following is a 173-amino-acid chain: Ribulose bisphosphate carboxylase small subunit, chloroplastic 3 (173 aa).

The transit peptide at 1-49 (MASIPATVATVAQANMVAPFTGLKSNAAFPVTKKVNDFSTLPSNGGRVQ) directs the protein to the chloroplast.

The protein belongs to the RuBisCO small chain family. As to quaternary structure, heterohexadecamer of 8 large and 8 small subunits.

It is found in the plastid. Its subcellular location is the chloroplast. Functionally, ruBisCO catalyzes two reactions: the carboxylation of D-ribulose 1,5-bisphosphate, the primary event in carbon dioxide fixation, as well as the oxidative fragmentation of the pentose substrate. Both reactions occur simultaneously and in competition at the same active site. Although the small subunit is not catalytic it is essential for maximal activity. The protein is Ribulose bisphosphate carboxylase small subunit, chloroplastic 3 of Flaveria pringlei.